We begin with the raw amino-acid sequence, 287 residues long: HTH-type transcriptional regulator MurR (287 aa).

In terms of domain architecture, HTH rpiR-type spans 1-77 (MLYLAKMRNA…MALIEEYSVN (77 aa)). Residues 37 to 56 (SRNLAKQLEVSQSSIVKFAQ) constitute a DNA-binding region (H-T-H motif). One can recognise an SIS domain in the interval 128–268 (VINLISKARL…FVGMVQLNDV (141 aa)).

In terms of assembly, homotetramer.

The protein operates within amino-sugar metabolism; N-acetylmuramate degradation [regulation]. Represses the expression of the murPQ operon involved in the uptake and degradation of N-acetylmuramic acid (MurNAc). Binds to two adjacent inverted repeats within the operator region. MurNAc 6-phosphate, the substrate of MurQ, is the specific inducer that weakens binding of MurR to the operator. The protein is HTH-type transcriptional regulator MurR of Citrobacter koseri (strain ATCC BAA-895 / CDC 4225-83 / SGSC4696).